We begin with the raw amino-acid sequence, 196 residues long: ATP-dependent Clp protease proteolytic subunit (196 aa).

Serine 101 (nucleophile) is an active-site residue. Residue histidine 126 is part of the active site.

Belongs to the peptidase S14 family. As to quaternary structure, component of the chloroplastic Clp protease core complex.

Its subcellular location is the plastid. The protein resides in the chloroplast stroma. It carries out the reaction Hydrolysis of proteins to small peptides in the presence of ATP and magnesium. alpha-casein is the usual test substrate. In the absence of ATP, only oligopeptides shorter than five residues are hydrolyzed (such as succinyl-Leu-Tyr-|-NHMec, and Leu-Tyr-Leu-|-Tyr-Trp, in which cleavage of the -Tyr-|-Leu- and -Tyr-|-Trp bonds also occurs).. Its function is as follows. Cleaves peptides in various proteins in a process that requires ATP hydrolysis. Has a chymotrypsin-like activity. Plays a major role in the degradation of misfolded proteins. The polypeptide is ATP-dependent Clp protease proteolytic subunit (Spinacia oleracea (Spinach)).